A 342-amino-acid polypeptide reads, in one-letter code: [Citrate [pro-3S]-lyase] ligase (342 aa).

Positions 1-127 constitute an N-acetyltransferase domain; that stretch reads MTLILKRVQL…RAVLMENSRE (127 aa).

The catalysed reaction is holo-[citrate lyase ACP] + acetate + ATP = acetyl-[citrate lyase ACP] + AMP + diphosphate. Functionally, acetylation of prosthetic group (2-(5''-phosphoribosyl)-3'-dephosphocoenzyme-A) of the gamma subunit of citrate lyase. This is [Citrate [pro-3S]-lyase] ligase (citC) from Klebsiella pneumoniae.